The chain runs to 214 residues: Large ribosomal subunit protein uL3 (214 aa).

N5-methylglutamine is present on glutamine 151.

The protein belongs to the universal ribosomal protein uL3 family. In terms of assembly, part of the 50S ribosomal subunit. Forms a cluster with proteins L14 and L19. Methylated by PrmB.

Functionally, one of the primary rRNA binding proteins, it binds directly near the 3'-end of the 23S rRNA, where it nucleates assembly of the 50S subunit. This Magnetococcus marinus (strain ATCC BAA-1437 / JCM 17883 / MC-1) protein is Large ribosomal subunit protein uL3.